The sequence spans 218 residues: Elongation factor Ts (218 aa).

Residues 82–85 (TDFV) form an involved in Mg(2+) ion dislocation from EF-Tu region.

Belongs to the EF-Ts family.

The protein resides in the cytoplasm. Functionally, associates with the EF-Tu.GDP complex and induces the exchange of GDP to GTP. It remains bound to the aminoacyl-tRNA.EF-Tu.GTP complex up to the GTP hydrolysis stage on the ribosome. The protein is Elongation factor Ts (tsf) of Synechocystis sp. (strain ATCC 27184 / PCC 6803 / Kazusa).